A 241-amino-acid polypeptide reads, in one-letter code: uncharacterized protein (241 aa).

S-adenosyl-L-methionine-binding positions include 78-80 (TSA), G111, I131, and 138-140 (SSL).

The protein belongs to the class IV-like SAM-binding methyltransferase superfamily. RNA methyltransferase TrmH family.

This is an uncharacterized protein from Haemophilus influenzae (strain ATCC 51907 / DSM 11121 / KW20 / Rd).